The following is an 84-amino-acid chain: U4-theraphotoxin-Hhn1ac (84 aa).

The N-terminal stretch at 1–22 (MKVTLIAILTCAAVLVLHTTAA) is a signal peptide. A propeptide spanning residues 23–47 (EELEESQLMEVGMPDTELAAVDEER) is cleaved from the precursor. 3 disulfide bridges follow: C51/C65, C55/C76, and C70/C81.

The protein belongs to the neurotoxin 12 (Hwtx-2) family. 02 (Hwtx-2) subfamily. In terms of tissue distribution, expressed by the venom gland.

Its subcellular location is the secreted. In terms of biological role, postsynaptic neurotoxin. The chain is U4-theraphotoxin-Hhn1ac from Cyriopagopus hainanus (Chinese bird spider).